Reading from the N-terminus, the 691-residue chain is Calcium-binding and coiled-coil domain-containing protein 1 (691 aa).

The p300 KIX-binding stretch occupies residues Met-1–Val-30. An N-terminal AD (CTNNB1 binding site) region spans residues Met-1–Thr-190. A Phosphoserine modification is found at Ser-4. The segment at Ser-45–Asp-125 is interaction with GATA1. Coiled coils occupy residues Lys-145–Ile-205, Glu-232–Glu-339, and Gln-417–Lys-514. Residues Arg-501 to Glu-691 are C-terminal AD (CTNNB1 binding site); interaction with CCAR1. A disordered region spans residues Lys-514–Leu-606. The UBZ1-type zinc-finger motif lies at Trp-653–His-679. 4 residues coordinate Zn(2+): Cys-656, Cys-659, His-675, and His-679.

This sequence belongs to the CALCOCO family. Part of a calphoglin complex consisting of CALCOCO1, PPA1 and PGM. Interacts with the bHLH-PAS domains of GRIP1, AHR and ARNT. Interacts with CTNNB1 via both its N- and C-terminal regions. Interacts with EP300. Interacts with CCAR1 (via N-terminus) and GATA1.

It localises to the cytoplasm. The protein localises to the nucleus. Functions as a coactivator for aryl hydrocarbon and nuclear receptors (NR). Recruited to promoters through its contact with the N-terminal basic helix-loop-helix-Per-Arnt-Sim (PAS) domain of transcription factors or coactivators, such as NCOA2. During ER-activation acts synergistically in combination with other NCOA2-binding proteins, such as EP300, CREBBP and CARM1. Involved in the transcriptional activation of target genes in the Wnt/CTNNB1 pathway. Functions as a secondary coactivator in LEF1-mediated transcriptional activation via its interaction with CTNNB1. Coactivator function for nuclear receptors and LEF1/CTNNB1 involves differential utilization of two different activation regions. In association with CCAR1 enhances GATA1- and MED1-mediated transcriptional activation from the gamma-globin promoter during erythroid differentiation of K562 erythroleukemia cells. In terms of biological role, seems to enhance inorganic pyrophosphatase thus activating phosphogluomutase (PMG). Probably functions as a component of the calphoglin complex, which is involved in linking cellular metabolism (phosphate and glucose metabolism) with other core functions including protein synthesis and degradation, calcium signaling and cell growth. The chain is Calcium-binding and coiled-coil domain-containing protein 1 (CALCOCO1) from Homo sapiens (Human).